A 227-amino-acid chain; its full sequence is Octanoyltransferase (227 aa).

Residues 43 to 218 form the BPL/LPL catalytic domain; it reads ADSQDELWIV…TFTKTLGYQE (176 aa). Substrate contacts are provided by residues 82-89, 149-151, and 162-164; these read RGGQVTYH, SLG, and GLA. C180 serves as the catalytic Acyl-thioester intermediate.

It belongs to the LipB family.

The protein resides in the cytoplasm. It catalyses the reaction octanoyl-[ACP] + L-lysyl-[protein] = N(6)-octanoyl-L-lysyl-[protein] + holo-[ACP] + H(+). It functions in the pathway protein modification; protein lipoylation via endogenous pathway; protein N(6)-(lipoyl)lysine from octanoyl-[acyl-carrier-protein]: step 1/2. In terms of biological role, catalyzes the transfer of endogenously produced octanoic acid from octanoyl-acyl-carrier-protein onto the lipoyl domains of lipoate-dependent enzymes. Lipoyl-ACP can also act as a substrate although octanoyl-ACP is likely to be the physiological substrate. The sequence is that of Octanoyltransferase from Shewanella denitrificans (strain OS217 / ATCC BAA-1090 / DSM 15013).